Reading from the N-terminus, the 183-residue chain is Non-classical export protein 2 homolog (183 aa).

At 1–8 (MVGIRQYG) the chain is on the cytoplasmic side. A helical transmembrane segment spans residues 9–29 (VFTWVFRTFQLAIDTIVLALA). The Extracellular portion of the chain corresponds to 30-44 (SALVNQQTSGGSPGK). The helical transmembrane segment at 45–65 (INFSVAVGSFAILTFFLTAVG) threads the bilayer. At 66 to 75 (RFLPTILGNP) the chain is on the cytoplasmic side. Residues 76 to 96 (WLIAFYDFVNWVFALTGGCCI) form a helical membrane-spanning segment. The Extracellular segment spans residues 97–131 (AVAIRVHACDNQKYLDRNHYTQGSMRRCQELKALC). Residues 132–152 (FFLWFMFGLYVASFIVQIFIA) traverse the membrane as a helical segment. Over 153–183 (KNDTPNYTFRGRGRGKGSGPAVAPRPVMSAV) the chain is Cytoplasmic. The tract at residues 163-183 (GRGRGKGSGPAVAPRPVMSAV) is disordered.

This sequence belongs to the NCE102 family.

The protein localises to the cytoplasm. It localises to the golgi apparatus membrane. The protein resides in the cell membrane. Its function is as follows. Involved in membrane organization and might act as a sensor of sphingolipids that regulates plasma membrane function. Involved in a novel pathway of export of proteins that lack a cleavable signal sequence. The polypeptide is Non-classical export protein 2 homolog (fhn1) (Schizosaccharomyces pombe (strain 972 / ATCC 24843) (Fission yeast)).